Reading from the N-terminus, the 230-residue chain is MKLTLEPAPRCLHEYVSQLLEDWQPECLSCEYSHGGSSPPSLHDLFDLELENSRSPSPLLCDWCAEADSESTISTETDVGFTLNTPPVSPLPSYSTSPASIPEDMLLCLEEMPTFDDGDEVRSATTSFEHWENNFDPNVGSFFGCLRCAYYQEQGENSICGLCYLKALAEEPVDADAGEDDEVIFVSAKPGSRKRSAVTSRGSVESSKRPCLPEPEQTEPLDLSLKPRPQ.

Positions 40–48 are interaction with RB1 in competition with E2F1; sequence PSLHDLFDL. The LXCXE motif, interaction with host RB1 motif lies at 106-110; it reads LLCLE. A zinc finger spans residues 145 to 163; it reads CLRCAYYQEQGENSICGLC. Residues 189 to 230 form a disordered region; that stretch reads KPGSRKRSAVTSRGSVESSKRPCLPEPEQTEPLDLSLKPRPQ. A PXDLS motif, CTBP-binding motif is present at residues 220–224; it reads PLDLS. The short motif at 226–230 is the Nuclear localization signal element; it reads KPRPQ.

Belongs to the adenoviridae E1A protein family. In terms of assembly, interacts with host UBE2I; this interaction interferes with polySUMOylation. Interacts with host RB1; this interaction induces the aberrant dissociation of RB1-E2F1 complex thereby disrupting the activity of RB1 and activating E2F1-regulated genes. Interacts with host ATF7; the interaction enhances ATF7-mediated viral transactivation activity which requires the zinc binding domains of both proteins. Isoform early E1A 32 kDa protein and isoform early E1A 26 kDa protein interact (via N-terminus) with CUL1 and E3 ubiquitin ligase RBX1; these interactions inhibit RBX1-CUL1-dependent elongation reaction of ubiquitin chains and attenuate ubiquitination of SCF(FBXW7) target proteins. Interacts (via PXLXP motif) with host ZMYND11/BS69 (via MYND-type zinc finger); this interaction inhibits E1A mediated transactivation. Interacts with host EP300; this interaction stimulates the acetylation of RB1 by recruiting EP300 and RB1 into a multimeric-protein complex. Interacts with host CTBP1 and CTBP2; this interaction seems to potentiate viral replication. Interacts with host DCAF7. Interacts with host DYRK1A. Interacts with host KPNA4; this interaction allows E1A import into the host nucleus. Interacts with host EP400; this interaction stabilizes MYC. Interacts with host TBP protein; this interaction probably disrupts the TBP-TATA complex.

It localises to the host nucleus. Functionally, plays a role in viral genome replication by driving entry of quiescent cells into the cell cycle. Stimulation of progression from G1 to S phase allows the virus to efficiently use the cellular DNA replicating machinery to achieve viral genome replication. E1A protein has both transforming and trans-activating activities. Induces the disassembly of the E2F1 transcription factor from RB1 by direct competition for the same binding site on RB1, with subsequent transcriptional activation of E2F1-regulated S-phase genes and of the E2 region of the adenoviral genome. Release of E2F1 leads to the ARF-mediated inhibition of MDM2 and causes TP53/p53 to accumulate because it is not targeted for degradation by MDM2-mediated ubiquitination anymore. This increase in TP53, in turn, would arrest the cell proliferation and direct its death but this effect is counteracted by the viral protein E1B-55K. Inactivation of the ability of RB1 to arrest the cell cycle is critical for cellular transformation, uncontrolled cellular growth and proliferation induced by viral infection. Interaction with RBX1 and CUL1 inhibits ubiquitination of the proteins targeted by SCF(FBXW7) ubiquitin ligase complex, and may be linked to unregulated host cell proliferation. The tumorigenesis-restraining activity of E1A may be related to the disruption of the host CtBP-CtIP complex through the CtBP binding motif. This is Early E1A protein from Canine adenovirus serotype 1 (strain CLL) (CAdV-1).